The chain runs to 155 residues: S-ribosylhomocysteine lyase (155 aa).

Fe cation is bound by residues histidine 58, histidine 62, and cysteine 125.

The protein belongs to the LuxS family. In terms of assembly, homodimer. Fe cation is required as a cofactor.

The enzyme catalyses S-(5-deoxy-D-ribos-5-yl)-L-homocysteine = (S)-4,5-dihydroxypentane-2,3-dione + L-homocysteine. Its function is as follows. Involved in the synthesis of autoinducer 2 (AI-2) which is secreted by bacteria and is used to communicate both the cell density and the metabolic potential of the environment. The regulation of gene expression in response to changes in cell density is called quorum sensing. Catalyzes the transformation of S-ribosylhomocysteine (RHC) to homocysteine (HC) and 4,5-dihydroxy-2,3-pentadione (DPD). This Helicobacter pylori (strain HPAG1) protein is S-ribosylhomocysteine lyase.